A 214-amino-acid chain; its full sequence is Chalcone isomerase-like protein 1 (214 aa).

It belongs to the chalcone isomerase family. As to expression, mostly expressed in glandular trichomes (lupulin glands), and, to a lower extent, in cones, cones bracts, leaves, stems and roots.

The protein localises to the cytoplasm. It catalyses the reaction a chalcone = a flavanone.. It functions in the pathway secondary metabolite biosynthesis; flavonoid biosynthesis. Functionally, involved in the biosynthesis of prenylated phenolics natural products which contribute to the bitter taste of beer and display broad biological activities. Involved in anthocyanin biosynthesis. Polyketide binding proteins (PBP) which reduces the catalytic activities of CHS_H1 and PT1L and prevents demethylxanthohumol (DMX) production, by binding to DMX and naringenin chalcone (NC) to stabilize the chalconoids ring-opened structure. This chain is Chalcone isomerase-like protein 1, found in Humulus lupulus (European hop).